The sequence spans 475 residues: Putative aldehyde dehydrogenase SSP0762 (475 aa).

Residue 201–207 coordinates NAD(+); sequence GDGQGVG. Catalysis depends on residues Glu245 and Cys279.

This sequence belongs to the aldehyde dehydrogenase family.

The catalysed reaction is an aldehyde + NAD(+) + H2O = a carboxylate + NADH + 2 H(+). The polypeptide is Putative aldehyde dehydrogenase SSP0762 (Staphylococcus saprophyticus subsp. saprophyticus (strain ATCC 15305 / DSM 20229 / NCIMB 8711 / NCTC 7292 / S-41)).